The primary structure comprises 86 residues: Small ribosomal subunit protein uS17 (86 aa).

The protein belongs to the universal ribosomal protein uS17 family. Part of the 30S ribosomal subunit.

Functionally, one of the primary rRNA binding proteins, it binds specifically to the 5'-end of 16S ribosomal RNA. The sequence is that of Small ribosomal subunit protein uS17 from Streptococcus mutans serotype c (strain ATCC 700610 / UA159).